A 156-amino-acid chain; its full sequence is Beta-defensin 125 (156 aa).

The N-terminal stretch at Met1–Gly20 is a signal peptide. Intrachain disulfides connect Cys27–Cys55, Cys35–Cys49, and Cys39–Cys56. The propeptide occupies Pro68 to Asn156. The tract at residues Gly108–Asn156 is disordered. A compositionally biased stretch (low complexity) spans Glu109 to Thr144.

This sequence belongs to the beta-defensin family.

It is found in the secreted. Functionally, has antibacterial activity. In Homo sapiens (Human), this protein is Beta-defensin 125 (DEFB125).